The sequence spans 194 residues: Xanthine phosphoribosyltransferase (194 aa).

The xanthine site is built by L20 and N27. A128–A132 lines the 5-phospho-alpha-D-ribose 1-diphosphate pocket. A xanthine-binding site is contributed by K156.

This sequence belongs to the purine/pyrimidine phosphoribosyltransferase family. Xpt subfamily. In terms of assembly, homodimer.

Its subcellular location is the cytoplasm. The enzyme catalyses XMP + diphosphate = xanthine + 5-phospho-alpha-D-ribose 1-diphosphate. Its pathway is purine metabolism; XMP biosynthesis via salvage pathway; XMP from xanthine: step 1/1. Converts the preformed base xanthine, a product of nucleic acid breakdown, to xanthosine 5'-monophosphate (XMP), so it can be reused for RNA or DNA synthesis. This chain is Xanthine phosphoribosyltransferase, found in Oceanobacillus iheyensis (strain DSM 14371 / CIP 107618 / JCM 11309 / KCTC 3954 / HTE831).